The primary structure comprises 141 residues: Vesicle-associated membrane protein 4 (141 aa).

The segment at 1–51 (MPPKFKRHLNDDDVTGSVKSERRNLLEDDSDEEEDFFLRGPSGPRFGPRND) is disordered. The Cytoplasmic segment spans residues 1–118 (MPPKFKRHLN…MWWRGCKIKA (118 aa)). Phosphoserine occurs at positions 17 and 30. Positions 52–112 (KIKHVQNQVD…KQLRRQMWWR (61 aa)) constitute a v-SNARE coiled-coil homology domain. A helical; Anchor for type IV membrane protein transmembrane segment spans residues 119-139 (IMALAAAILLLMIIILIVVKF). At 140–141 (RT) the chain is on the vesicular side.

The protein belongs to the synaptobrevin family. In terms of assembly, identified in a complex containing STX6, STX12, VAMP4 and VTI1A. Interacts with BAIAP3; this interaction is increased in the presence of calcium. In terms of processing, (Microbial infection) Targeted and hydrolyzed by C.botulinum neurotoxin type X (BoNT/X) which hydrolyzes the 87-Arg-|-Ser-88 bond and probably inhibits neurotransmitter release. It remains unknown whether BoNT/X is ever produced, or what organisms it targets.

It is found in the golgi apparatus. Its subcellular location is the trans-Golgi network membrane. Its function is as follows. Involved in the pathway that functions to remove an inhibitor (probably synaptotagmin-4) of calcium-triggered exocytosis during the maturation of secretory granules. May be a marker for this sorting pathway that is critical for remodeling the secretory response of granule. The sequence is that of Vesicle-associated membrane protein 4 (Vamp4) from Mus musculus (Mouse).